Reading from the N-terminus, the 234-residue chain is Octanoyltransferase (234 aa).

Residues 50–234 (GEAPELVWLL…AFEQVFGPTR (185 aa)) enclose the BPL/LPL catalytic domain. Substrate contacts are provided by residues 88–95 (RGGQITYH), 163–165 (AIG), and 176–178 (GIA). Cys-194 functions as the Acyl-thioester intermediate in the catalytic mechanism.

This sequence belongs to the LipB family.

It localises to the cytoplasm. The catalysed reaction is octanoyl-[ACP] + L-lysyl-[protein] = N(6)-octanoyl-L-lysyl-[protein] + holo-[ACP] + H(+). Its pathway is protein modification; protein lipoylation via endogenous pathway; protein N(6)-(lipoyl)lysine from octanoyl-[acyl-carrier-protein]: step 1/2. In terms of biological role, catalyzes the transfer of endogenously produced octanoic acid from octanoyl-acyl-carrier-protein onto the lipoyl domains of lipoate-dependent enzymes. Lipoyl-ACP can also act as a substrate although octanoyl-ACP is likely to be the physiological substrate. In Rhodopseudomonas palustris (strain BisA53), this protein is Octanoyltransferase.